Consider the following 207-residue polypeptide: MGRCSGRCTLVGICCLQLAAALQRQIFDFLGYQWAPILANFLHIMVVILGILGTLHYRSRYLILYSIWLALWVAWNAFIICFYLEVGHFSQHRDLIMNFNTSMHRSWWMENGPGCLVTPVRGPPLSLADHHMVTVTGCLLDYPYIEALSSALQIFLALFGFVYACYVSKVFMDEEDSFDFIGSYDSYGYQAPMKTSHLQLQPLYKPG.

The next 3 helical transmembrane spans lie at Gly2–Leu22, Ala35–Leu55, and Leu62–Phe82. N-linked (GlcNAc...) asparagine glycosylation is present at Asn100. Residues Ala147 to Val167 traverse the membrane as a helical segment.

The protein belongs to the NKAIN family. As to quaternary structure, interacts with atp1b1 C-terminus.

Its subcellular location is the cell membrane. The sequence is that of Sodium/potassium-transporting ATPase subunit beta-1-interacting protein 1 (nkain1) from Xenopus laevis (African clawed frog).